Reading from the N-terminus, the 486-residue chain is Zinc transporter 6 (486 aa).

The Cytoplasmic portion of the chain corresponds to 1 to 60; it reads MVALDVLGITDSDAPVYRQKQEADTLVLGTIHPFRKAHRSVLGKLAQEFRLVTSDRRSWK. Residues 61–81 traverse the membrane as a helical segment; that stretch reads ILLFGVLNVVCTGCLLMWCSS. Topologically, residues 82–91 are extracellular; the sequence is TNSMALTAYT. The chain crosses the membrane as a helical span at residues 92–112; the sequence is YLTIFDLFSLITCLLSLWVTM. The Cytoplasmic portion of the chain corresponds to 113–125; the sequence is KKPSQIYSFGFQR. The helical transmembrane segment at 126–146 threads the bilayer; sequence FEVLAVFSSTVLVQLGSLFIL. The Extracellular segment spans residues 147-161; that stretch reads KESVERFVEQPEVHT. A helical transmembrane segment spans residues 162-182; it reads GRLLVGTFVALFFNLLTLLSV. Over 183–227 the chain is Cytoplasmic; the sequence is KNKPFVFVSEAASTSWLQEHVADLSRSLCGLIPALSSFLLPRMNP. The helical transmembrane segment at 228 to 248 threads the bilayer; the sequence is FVLINLAGAFALGITYMLIEI. Topologically, residues 249–255 are extracellular; sequence NNYNAMD. A helical membrane pass occupies residues 256-276; sequence TASAVAIALMTFGTMYPMSVY. Residues 277–486 lie on the Cytoplasmic side of the membrane; that stretch reads SGKVLLQTTP…SGTYTGPPRP (210 aa). A compositionally biased stretch (low complexity) spans 394-411; the sequence is PSRAQGSEPTPATSTPAK. The disordered stretch occupies residues 394–425; it reads PSRAQGSEPTPATSTPAKPSSPPPEFSFHTPG.

It belongs to the cation diffusion facilitator (CDF) transporter (TC 2.A.4) family. SLC30A subfamily. Heterodimer with SLC30A5; form a functional zinc ion transmembrane transporter.

It is found in the golgi apparatus. The protein localises to the trans-Golgi network membrane. Functionally, has probably no intrinsic transporter activity but together with SLC30A5 forms a functional zinc ion:proton antiporter heterodimer, mediating zinc entry into the lumen of organelles along the secretory pathway. As part of that zinc ion:proton antiporter, contributes to zinc ion homeostasis within the early secretory pathway and regulates the activation and folding of enzymes like alkaline phosphatases and enzymes involved in phosphatidylinositol glycan anchor biosynthesis. This Danio rerio (Zebrafish) protein is Zinc transporter 6 (slc30a6).